The following is a 513-amino-acid chain: Dye-decolorizing peroxidase msp1 (513 aa).

A signal peptide spans 1 to 20 (MKLFSASVFAAIIASHYASA). The propeptide occupies 21–55 (TAHIRAPNVKPRRTNSLLTAPPQQPPLPSAQQAAS). The interval 33 to 52 (RTNSLLTAPPQQPPLPSAQQ) is disordered. The active-site Proton acceptor is the Asp228. His365 provides a ligand contact to heme.

Homodimer. It depends on heme b as a cofactor.

It is found in the secreted. It carries out the reaction Reactive Blue 5 + 2 H2O2 = 2,2'-disulfonyl azobenzene + 3-[(4-amino-6-chloro-1,3,5-triazin-2-yl)amino]benzenesulfonate + phthalate + 2 H2O + 2 H(+). The enzyme catalyses 2 a phenolic donor + H2O2 = 2 a phenolic radical donor + 2 H2O. Its function is as follows. Manganese-independent peroxidase that is able to convert a large number of compounds, but its physiological substrate is not known. In addition to classic peroxidase substrates (e.g. 2,6-dimethoxyphenol), oxidizes dyes such as Reactive Blue 5. Also degrades beta-carotene. The chain is Dye-decolorizing peroxidase msp1 from Mycetinis scorodonius (Garlic mushroom).